A 372-amino-acid chain; its full sequence is Flagellar P-ring protein (372 aa).

The signal sequence occupies residues 1–26 (MNLSSLPFRLLAAAVALCAIAAPASA).

This sequence belongs to the FlgI family. As to quaternary structure, the basal body constitutes a major portion of the flagellar organelle and consists of four rings (L,P,S, and M) mounted on a central rod.

Its subcellular location is the periplasm. It localises to the bacterial flagellum basal body. Assembles around the rod to form the L-ring and probably protects the motor/basal body from shearing forces during rotation. This chain is Flagellar P-ring protein, found in Xanthomonas campestris pv. campestris (strain B100).